The sequence spans 538 residues: Phosphatidylethanolamine transferase Mcr-2 (538 aa).

5 helical membrane-spanning segments follow: residues 14-34, 47-67, 72-92, 121-141, and 161-181; these read PFVLMGLVALFLAATANLTFF, LGFIISMAVAVMGAMLLIVVL, YVLKPVLILLLIMGAVTSYFT, LAFFVRIIGLGVLPSVLVAVA, and VSLVLLLVPIGLFSSQYASFF. Zn(2+) is bound by residues E244 and T283. 3 cysteine pairs are disulfide-bonded: C279–C289, C354–C362, and C412–C420. T283 bears the Phosphothreonine mark. 2 residues coordinate Zn(2+): D463 and H464.

The protein belongs to the phosphoethanolamine transferase family. As to quaternary structure, monomer. Post-translationally, phosphorylated at Thr-283; may represent an intermediate in the catalytic mechanism.

The protein localises to the cell inner membrane. It carries out the reaction lipid A (E. coli) + a 1,2-diacyl-sn-glycero-3-phosphoethanolamine + H(+) = lipid A 4'-(2-aminoethyl diphosphate) (E. coli) + a 1,2-diacyl-sn-glycerol. Probably catalyzes the addition of a phosphoethanolamine moiety to lipid A. Phosphoethanolamine modification of lipid A confers polymyxin resistance. Confers resistance to polymyxin-type antibiotics such as colistin. The protein is Phosphatidylethanolamine transferase Mcr-2 of Escherichia coli.